Reading from the N-terminus, the 330-residue chain is uncharacterized protein (330 aa).

This is an uncharacterized protein from Archaeoglobus fulgidus (strain ATCC 49558 / DSM 4304 / JCM 9628 / NBRC 100126 / VC-16).